The primary structure comprises 1191 residues: Homeodomain-interacting protein kinase 3 (1191 aa).

A Glycyl lysine isopeptide (Lys-Gly) (interchain with G-Cter in SUMO2) cross-link involves residue Lys27. The 329-residue stretch at 197-525 (YEVLDFLGRG…PIETLNHPFV (329 aa)) folds into the Protein kinase domain. Residues 203 to 211 (LGRGTFGQV) and Lys226 each bind ATP. Asp322 functions as the Proton acceptor in the catalytic mechanism. Position 359 is a phosphotyrosine (Tyr359). An interaction with AR region spans residues 766–920 (QNRSNSLQNT…NSMSDDEQES (155 aa)). Positions 774 to 867 (NTNVPHSAFI…SPRPSLRECK (94 aa)) are interaction with FAS. A disordered region spans residues 801-828 (TQDNHTSEGEARTCHEASVRQDSSVSDK). The span at 802–828 (QDNHTSEGEARTCHEASVRQDSSVSDK) shows a compositional bias: basic and acidic residues. The interval 846–856 (ITISSDTDDEE) is interaction with UBL1. The segment covering 888 to 905 (SSPDSTLSTSSSGQSSPS) has biased composition (low complexity). Disordered stretches follow at residues 888–960 (SSPD…TCAG) and 993–1022 (TCQP…KPTS). Over residues 1008–1022 (NQPSASAARQQKPTS) the composition is skewed to polar residues.

It belongs to the protein kinase superfamily. CMGC Ser/Thr protein kinase family. HIPK subfamily. As to quaternary structure, interacts with Nkx1-2. Interacts with FAS and DAXX. Probably part of a complex consisting of HIPK3, FAS and FADD. Interacts with UBL1/SUMO-1. Interacts with and stabilizes ligand-bound androgen receptor (AR). In terms of processing, autophosphorylated. Autophosphorylation is not required for catalytic activity. May be sumoylated.

The protein localises to the nucleus. It catalyses the reaction L-seryl-[protein] + ATP = O-phospho-L-seryl-[protein] + ADP + H(+). The enzyme catalyses L-threonyl-[protein] + ATP = O-phospho-L-threonyl-[protein] + ADP + H(+). In terms of biological role, seems to negatively regulate apoptosis by promoting FADD phosphorylation. Enhances androgen receptor-mediated transcription. May act as a transcriptional corepressor for NK homeodomain transcription factors. In Rattus norvegicus (Rat), this protein is Homeodomain-interacting protein kinase 3 (Hipk3).